A 227-amino-acid polypeptide reads, in one-letter code: Ion-translocating oxidoreductase complex subunit E (227 aa).

Helical transmembrane passes span Ala34–Ser56, Ile68–Ala88, Phe91–Val111, Phe127–Ile147, and Thr181–Ile201.

The protein belongs to the NqrDE/RnfAE family. In terms of assembly, the complex is composed of six subunits: RnfA, RnfB, RnfC, RnfD, RnfE and RnfG.

It localises to the cell inner membrane. Its function is as follows. Part of a membrane-bound complex that couples electron transfer with translocation of ions across the membrane. The polypeptide is Ion-translocating oxidoreductase complex subunit E (Buchnera aphidicola subsp. Acyrthosiphon pisum (strain APS) (Acyrthosiphon pisum symbiotic bacterium)).